Consider the following 1139-residue polypeptide: Hapless 2 (1139 aa).

Positions 1–22 (MCRAIAVALIVYLAQHYILAHA) are cleaved as a signal peptide. Residues 23–630 (EVIASGRLEK…TKKCWSKFGR (608 aa)) lie on the Extracellular side of the membrane. 7 disulfides stabilise this stretch: Cys33/Cys44, Cys136/Cys164, Cys147/Cys210, Cys165/Cys383, Cys167/Cys190, Cys366/Cys390, and Cys475/Cys482. Residues 241-272 (APSPTTATTSATPRTNNSSSANSTNSTNSPAP) show a composition bias toward low complexity. The tract at residues 241-283 (APSPTTATTSATPRTNNSSSANSTNSTNSPAPQFLSPPAPSTR) is disordered. Residue Asn497 is glycosylated (N-linked (GlcNAc...) asparagine). A disulfide bridge connects residues Cys515 and Cys556. Residue Thr577 is glycosylated (O-linked (GlcNAc...) threonine). The chain crosses the membrane as a helical span at residues 631–651 (LLGIIGGALVGLGLLAVALKF). Residues 652–1139 (GWLASLAASC…PVYDWQAPPK (488 aa)) lie on the Cytoplasmic side of the membrane. 2 disordered regions span residues 689–719 (GGGQ…AEVA) and 741–1139 (HGGG…APPK). The segment covering 753-767 (QHADTRHLQDRDSRA) has biased composition (basic and acidic residues). Residues 770–789 (GGASIGSSSAGGSSSLSSYS) are compositionally biased toward low complexity. A compositionally biased stretch (basic and acidic residues) spans 829–851 (WDARGRSPRVADEHGSPRQRYDG). The segment covering 868–884 (YDGGSGGGGGGGGGGYG) has biased composition (gly residues). The span at 887–904 (APPPQGPPPHPVGAPPPP) shows a compositional bias: pro residues. Gly residues-rich tracts occupy residues 919 to 943 (PGGG…GVDQ) and 955 to 965 (RGGGGPGGMRG). The segment covering 978–991 (GPHPHAPPPPPPPQ) has biased composition (pro residues). The segment covering 1018–1029 (GREEEAGGDRRG) has biased composition (basic and acidic residues). The segment covering 1040–1049 (GGRGAGGGRG) has biased composition (gly residues). Over residues 1054–1067 (IGSPPPGPLQPPEY) the composition is skewed to pro residues. 2 stretches are compositionally biased toward gly residues: residues 1078–1096 (GAGG…GGVG) and 1106–1118 (GGRG…GRGR).

It belongs to the HAP2/GCS1 family. As to quaternary structure, monomer. Homotrimer. Membrane contact and insertion (via its extracellular domain) into a lipid membrane probably triggers trimerization. In terms of processing, the protein present at the cell membrane is rapidly degraded after fusion between male (minus) and female (plus) gametes, contrary to the protein present in intracellular pools. This may represent a mechanism to avoid fusion of several male gametes with a single female gamete. Post-translationally, N-glycosylated.

It localises to the cell membrane. It is found in the cell projection. The protein localises to the cytoplasmic vesicle membrane. Its function is as follows. During fertilization, required on male (minus) gametes for their fusion with female (plus) gametes. Required for membrane fusion, but not for the initial adhesion between gametes. Inserts (via its extracellular domain) into lipid membranes (in vitro). Probably initiates the fusion of gamete cell membranes by inserting its extracellular domain into the cell membrane of a female gamete. This is Hapless 2 from Chlamydomonas reinhardtii (Chlamydomonas smithii).